The sequence spans 413 residues: MDFTNLKNTDPELLDMIKKEEERQEYNIELIASENFTSLSVMEAMGSLLTNKYAEGYPHKRYYGGCEFVDEVEDLARERLKKLFVAEHANVQPHSGSQANMAVYMSVLQTGDTILGMDLSHGGHLTHGSPVNFSGKLYNFISYGVDKETETIDYDQLKKIALENRPKMIVSGASAYPRIIDFEKIREICDEIDAYMMVDMAHIAGLVATGIHPSPVPYADFVTTTTHKTLRGPRGGAILCKEKYAKAVDKAIFPGIQGGPLMHTIAAKAVCFGEALREDYKEYMQQVVKNTKVLGEELKNYGFRLISGGTDNHLLLIDLTNKNITGKDAEKLLDSVGITVNKNTIPFETLSPFITSGIRIGTPAVTTRGFKEEEMKKIAYFMNYSIEHREENLSQIKEQIKEICKKYPLHQNA.

Residues L119 and 123-125 (GHL) contribute to the (6S)-5,6,7,8-tetrahydrofolate site. K228 carries the N6-(pyridoxal phosphate)lysine modification. 351 to 353 (SPF) is a binding site for (6S)-5,6,7,8-tetrahydrofolate.

The protein belongs to the SHMT family. In terms of assembly, homodimer. Requires pyridoxal 5'-phosphate as cofactor.

It localises to the cytoplasm. It catalyses the reaction (6R)-5,10-methylene-5,6,7,8-tetrahydrofolate + glycine + H2O = (6S)-5,6,7,8-tetrahydrofolate + L-serine. The protein operates within one-carbon metabolism; tetrahydrofolate interconversion. It functions in the pathway amino-acid biosynthesis; glycine biosynthesis; glycine from L-serine: step 1/1. Catalyzes the reversible interconversion of serine and glycine with tetrahydrofolate (THF) serving as the one-carbon carrier. This reaction serves as the major source of one-carbon groups required for the biosynthesis of purines, thymidylate, methionine, and other important biomolecules. Also exhibits THF-independent aldolase activity toward beta-hydroxyamino acids, producing glycine and aldehydes, via a retro-aldol mechanism. The chain is Serine hydroxymethyltransferase from Clostridium botulinum (strain Okra / Type B1).